A 290-amino-acid polypeptide reads, in one-letter code: 4-hydroxy-tetrahydrodipicolinate synthase (290 aa).

T48 lines the pyruvate pocket. The Proton donor/acceptor role is filled by Y137. K165 acts as the Schiff-base intermediate with substrate in catalysis. I206 contacts pyruvate.

This sequence belongs to the DapA family. In terms of assembly, homotetramer; dimer of dimers.

Its subcellular location is the cytoplasm. It catalyses the reaction L-aspartate 4-semialdehyde + pyruvate = (2S,4S)-4-hydroxy-2,3,4,5-tetrahydrodipicolinate + H2O + H(+). It functions in the pathway amino-acid biosynthesis; L-lysine biosynthesis via DAP pathway; (S)-tetrahydrodipicolinate from L-aspartate: step 3/4. In terms of biological role, catalyzes the condensation of (S)-aspartate-beta-semialdehyde [(S)-ASA] and pyruvate to 4-hydroxy-tetrahydrodipicolinate (HTPA). The protein is 4-hydroxy-tetrahydrodipicolinate synthase of Enterococcus faecalis (strain ATCC 700802 / V583).